We begin with the raw amino-acid sequence, 699 residues long: Triacylglycerol hydrolase DDHD2 (699 aa).

Residues 1 to 11 (MSSGESHQEQL) show a composition bias toward polar residues. The disordered stretch occupies residues 1–25 (MSSGESHQEQLSQSDPSPSPNSCSS). The segment covering 12–25 (SQSDPSPSPNSCSS) has biased composition (low complexity). Residues 30 to 112 (DMDASSSYEP…WDELPSEVRR (83 aa)) enclose the WWE domain. Residue Ser351 is the Nucleophile of the active site. The 63-residue stretch at 383-445 (DRGDASTLEE…KILNHFSARK (63 aa)) folds into the SAM domain. Phosphoserine is present on Ser447. The DDHD domain maps to 484-688 (LNYKPEIFFA…VLLVLKEIYQ (205 aa)). Positions 599–635 (QASETAEETEAEPESSSEKSNEANTEEPPVEVKEEAP) are disordered. Residues 603 to 613 (TAEETEAEPES) show a composition bias toward acidic residues.

This sequence belongs to the PA-PLA1 family. Forms homooligomers and, to a much smaller extent, heterooligomers with DDHD1.

The protein resides in the cytoplasm. It localises to the cytosol. It is found in the endoplasmic reticulum-Golgi intermediate compartment. Its subcellular location is the golgi apparatus. The protein localises to the cis-Golgi network. It catalyses the reaction a triacylglycerol + H2O = a diacylglycerol + a fatty acid + H(+). The enzyme catalyses a diacylglycerol + H2O = a monoacylglycerol + a fatty acid + H(+). It carries out the reaction a 1,3-diacylglycerol + H2O = a 1-acylglycerol + a fatty acid + H(+). The catalysed reaction is a 1-acylglycerol + H2O = glycerol + a fatty acid + H(+). It catalyses the reaction 1,2,3-tri-(9Z-octadecenoyl)-glycerol + H2O = di-(9Z)-octadecenoylglycerol + (9Z)-octadecenoate + H(+). The enzyme catalyses di-(9Z)-octadecenoylglycerol + H2O = (9Z-octadecenoyl)-glycerol + (9Z)-octadecenoate + H(+). It carries out the reaction 1,3-di-(9Z-octadecenoyl)-glycerol + H2O = 1-(9Z-octadecenoyl)-glycerol + (9Z)-octadecenoate + H(+). The catalysed reaction is trihexadecanoylglycerol + H2O = dihexadecanoylglycerol + hexadecanoate + H(+). It catalyses the reaction 1,2-di-(9Z-octadecenoyl)-sn-glycero-3-phosphocholine + H2O = (9Z-octadecenoyl)-sn-glycero-3-phosphocholine + (9Z)-octadecenoate + H(+). The enzyme catalyses 1-(9Z-octadecenoyl)-glycerol + H2O = glycerol + (9Z)-octadecenoate + H(+). It carries out the reaction 1,2-di-(9Z-octadecenoyl)-sn-glycero-3-phosphate + H2O = 2-(9Z-octadecenoyl)-sn-glycero-3-phosphate + (9Z)-octadecenoate + H(+). The catalysed reaction is 1-hexadecanoyl-2-(9Z-octadecenoyl)-sn-glycero-3-phosphate + H2O = 2-(9Z-octadecenoyl)-sn-glycero-3-phosphate + hexadecanoate + H(+). It catalyses the reaction 1-hexadecanoyl-2-(9Z-octadecenoyl)-sn-glycero-3-phosphoethanolamine + H2O = 2-(9Z-octadecenoyl)-sn-glycero-3-phosphoethanolamine + hexadecanoate + H(+). The enzyme catalyses 1-hexadecanoyl-2-(9Z-octadecenoyl)-sn-glycero-3-phospho-L-serine + H2O = 2-(9Z-octadecenoyl)-sn-glycero-3-phospho-L-serine + hexadecanoate + H(+). It carries out the reaction 1-hexadecanoyl-2-(9Z-octadecenoyl)-sn-glycero-3-phosphocholine + H2O = 2-(9Z-octadecenoyl)-sn-glycero-3-phosphocholine + hexadecanoate + H(+). In terms of biological role, diacylglycerol (DAG) and triacylglycerol (TAG) lipase that is required for proper lipid homeostasis in the central nervous system. It cooperates with PNPLA2/ATGL in neuronal TAG catabolism and hydrolyzes sn-1,3-DAG downstream of PNPLA2/ATGL. In vitro, also acts as a phospholipase that hydrolyzes preferentially phosphatidic acids, including 1,2-dioleoyl-sn-phosphatidic acid, phosphatidylcholine and phosphatidylethanolamine. Specifically binds to phosphatidylinositol 3-phosphate (PI(3)P), phosphatidylinositol 4-phosphate (PI(4)P), phosphatidylinositol 5-phosphate (PI(5)P) and possibly phosphatidylinositol 4,5-bisphosphate (PI(4,5)P2). May be involved in the maintenance of the endoplasmic reticulum and/or Golgi structures. May regulate the transport between Golgi apparatus and plasma membrane. The sequence is that of Triacylglycerol hydrolase DDHD2 from Mus musculus (Mouse).